The sequence spans 323 residues: Germacrene A synthase (323 aa).

Mg(2+)-binding residues include aspartate 82, aspartate 86, asparagine 222, serine 226, and glutamate 230. Positions 82 to 86 match the DDXXD motif motif; it reads DDQCD.

This sequence belongs to the terpene synthase family. Mg(2+) is required as a cofactor.

The catalysed reaction is (2E,6E)-farnesyl diphosphate = 5-epi-alpha-selinene + diphosphate. Its function is as follows. Catalyzes the cyclization of farnesyl diphosphate (FPP) to the sesquiterpene germacrene A. This is Germacrene A synthase from Nostoc punctiforme (strain ATCC 29133 / PCC 73102).